The sequence spans 120 residues: Dense granule protein 5 (120 aa).

Residues 1–25 (MASVKRVVVAVMIVNVLALIFVGVA) form the signal peptide. The tract at residues 27–59 (STRDVGSGGDDSEGARGREQQQVQQHEQNEDRS) is disordered. Residues 76-93 (AVGLAAAVVAVVSLLRLL) form a helical membrane-spanning segment. The span at 100-109 (AIQEESKESA) shows a compositional bias: basic and acidic residues. The interval 100–120 (AIQEESKESATAEEEEVAEEE) is disordered. Residues 110–120 (TAEEEEVAEEE) show a composition bias toward acidic residues.

The protein resides in the secreted. The protein localises to the parasitophorous vacuole lumen. Its subcellular location is the parasitophorous vacuole membrane. It is found in the cytoplasmic vesicle. It localises to the secretory vesicle. In terms of biological role, plays a role in the function of the cyst and parasitophorous vacuole membranes and therefore in host-parasite interactions. In Toxoplasma gondii, this protein is Dense granule protein 5 (GRA5).